The following is a 90-amino-acid chain: Small ribosomal subunit protein uS15 (90 aa).

The protein belongs to the universal ribosomal protein uS15 family. As to quaternary structure, part of the 30S ribosomal subunit. Forms a bridge to the 50S subunit in the 70S ribosome, contacting the 23S rRNA.

One of the primary rRNA binding proteins, it binds directly to 16S rRNA where it helps nucleate assembly of the platform of the 30S subunit by binding and bridging several RNA helices of the 16S rRNA. In terms of biological role, forms an intersubunit bridge (bridge B4) with the 23S rRNA of the 50S subunit in the ribosome. This Wolbachia pipientis subsp. Culex pipiens (strain wPip) protein is Small ribosomal subunit protein uS15.